A 109-amino-acid chain; its full sequence is Putative double-stranded DNA mimic protein YciU (109 aa).

This sequence belongs to the putative dsDNA mimic protein family.

May act as a double-stranded DNA (dsDNA) mimic. Probably regulates the activity of a dsDNA-binding protein. This chain is Putative double-stranded DNA mimic protein YciU, found in Escherichia coli O45:K1 (strain S88 / ExPEC).